The following is a 184-amino-acid chain: ATP synthase subunit b, chloroplastic (184 aa).

The chain crosses the membrane as a helical span at residues 31-49 (IINSSVVLSVLIYFGKGVL).

It belongs to the ATPase B chain family. In terms of assembly, F-type ATPases have 2 components, F(1) - the catalytic core - and F(0) - the membrane proton channel. F(1) has five subunits: alpha(3), beta(3), gamma(1), delta(1), epsilon(1). F(0) has four main subunits: a(1), b(1), b'(1) and c(10-14). The alpha and beta chains form an alternating ring which encloses part of the gamma chain. F(1) is attached to F(0) by a central stalk formed by the gamma and epsilon chains, while a peripheral stalk is formed by the delta, b and b' chains.

It is found in the plastid. Its subcellular location is the chloroplast thylakoid membrane. Functionally, f(1)F(0) ATP synthase produces ATP from ADP in the presence of a proton or sodium gradient. F-type ATPases consist of two structural domains, F(1) containing the extramembraneous catalytic core and F(0) containing the membrane proton channel, linked together by a central stalk and a peripheral stalk. During catalysis, ATP synthesis in the catalytic domain of F(1) is coupled via a rotary mechanism of the central stalk subunits to proton translocation. Its function is as follows. Component of the F(0) channel, it forms part of the peripheral stalk, linking F(1) to F(0). In Pinus thunbergii (Japanese black pine), this protein is ATP synthase subunit b, chloroplastic.